Consider the following 199-residue polypeptide: HTH-type transcriptional repressor NemR (199 aa).

Positions 7–67 (HDTREHLLAT…AMLERHYAAY (61 aa)) constitute an HTH tetR-type domain. The H-T-H motif DNA-binding region spans 30–49 (GLSELLKTAEVPKGSFYHYF).

In terms of biological role, involved in response to both electrophiles and reactive chlorine species (RCS). Represses the transcription of the nemRA-gloA operon by binding to the NemR box. This is HTH-type transcriptional repressor NemR (nemR) from Escherichia coli O6:H1 (strain CFT073 / ATCC 700928 / UPEC).